A 399-amino-acid polypeptide reads, in one-letter code: MYIKVLSVSELNNYIKRVVDSDYILSNAQVKGEISNFKFHSSGHVYFSLKDEGGKINCIMFRSNAEKLKFIPENGMKVNVKGRVSVYVKDGAYQLYCTEITPEGRGELYEAFEKLKEKLLNEGMFSEEHKRNIPKYPKMIGVITSPTGAAIRDIINVATRRNKSVDMIICPTLVQGVNAPGELIKALDYLNNREDIDTIILARGGGSIEELWAFNDEKLAYAVYNSKKPVVTGVGHETDFTIVDFVSDRRAPTPSAAAEIAVPNINEEMNSFVSLKRALDTSIKTYIQNKCNQLEIAKRMLEKNSPEILIVNGYSSIDNFKYVLDMRIANKIKIEKEKILRYNSILKSNSPINILNKGYSIISDEIGNNISNVDKLKEPDKVHITFKDGKVNAKIDILR.

This sequence belongs to the XseA family. In terms of assembly, heterooligomer composed of large and small subunits.

The protein localises to the cytoplasm. It catalyses the reaction Exonucleolytic cleavage in either 5'- to 3'- or 3'- to 5'-direction to yield nucleoside 5'-phosphates.. Bidirectionally degrades single-stranded DNA into large acid-insoluble oligonucleotides, which are then degraded further into small acid-soluble oligonucleotides. In Clostridium acetobutylicum (strain ATCC 824 / DSM 792 / JCM 1419 / IAM 19013 / LMG 5710 / NBRC 13948 / NRRL B-527 / VKM B-1787 / 2291 / W), this protein is Exodeoxyribonuclease 7 large subunit.